Consider the following 314-residue polypeptide: Transcriptional regulatory protein GlnL (314 aa).

Residues 2 to 118 (RFFIADDDRA…EIVTVLQKVK (117 aa)) form the Response regulatory domain. The residue at position 54 (Asp54) is a 4-aspartylphosphate.

Phosphorylated by GlnK.

It is found in the cytoplasm. Functionally, member of the two-component regulatory system GlnL/GlnK that positively regulates the expression of the glsA-glnT operon in response to glutamine. GlnL binds the promoter region of glsA-glnT in vitro. In Bacillus subtilis (strain 168), this protein is Transcriptional regulatory protein GlnL (glnL).